Consider the following 299-residue polypeptide: Oxygen-dependent coproporphyrinogen-III oxidase (299 aa).

Ser92 serves as a coordination point for substrate. 2 residues coordinate a divalent metal cation: His96 and His106. Catalysis depends on His106, which acts as the Proton donor. Position 108-110 (108-110 (NVR)) interacts with substrate. The a divalent metal cation site is built by His145 and His175. The important for dimerization stretch occupies residues 240–275 (YVEFNLVWDRGTLFGLQTGGRTESILMSMPPLVRWE). A substrate-binding site is contributed by 258-260 (GGR).

It belongs to the aerobic coproporphyrinogen-III oxidase family. In terms of assembly, homodimer. A divalent metal cation serves as cofactor.

Its subcellular location is the cytoplasm. The enzyme catalyses coproporphyrinogen III + O2 + 2 H(+) = protoporphyrinogen IX + 2 CO2 + 2 H2O. The protein operates within porphyrin-containing compound metabolism; protoporphyrin-IX biosynthesis; protoporphyrinogen-IX from coproporphyrinogen-III (O2 route): step 1/1. Involved in the heme biosynthesis. Catalyzes the aerobic oxidative decarboxylation of propionate groups of rings A and B of coproporphyrinogen-III to yield the vinyl groups in protoporphyrinogen-IX. The sequence is that of Oxygen-dependent coproporphyrinogen-III oxidase from Salmonella dublin (strain CT_02021853).